The sequence spans 153 residues: NAD(P)H-quinone oxidoreductase subunit N (153 aa).

This sequence belongs to the complex I NdhN subunit family. As to quaternary structure, NDH-1 can be composed of about 15 different subunits; different subcomplexes with different compositions have been identified which probably have different functions.

It localises to the cellular thylakoid membrane. The catalysed reaction is a plastoquinone + NADH + (n+1) H(+)(in) = a plastoquinol + NAD(+) + n H(+)(out). It carries out the reaction a plastoquinone + NADPH + (n+1) H(+)(in) = a plastoquinol + NADP(+) + n H(+)(out). Its function is as follows. NDH-1 shuttles electrons from an unknown electron donor, via FMN and iron-sulfur (Fe-S) centers, to quinones in the respiratory and/or the photosynthetic chain. The immediate electron acceptor for the enzyme in this species is believed to be plastoquinone. Couples the redox reaction to proton translocation, and thus conserves the redox energy in a proton gradient. Cyanobacterial NDH-1 also plays a role in inorganic carbon-concentration. The sequence is that of NAD(P)H-quinone oxidoreductase subunit N from Synechococcus sp. (strain RCC307).